A 32-amino-acid chain; its full sequence is Photosystem I reaction center subunit XII (32 aa).

The helical transmembrane segment at 3 to 23 (SISDGQIVVALISAFIIVILA) threads the bilayer.

The protein belongs to the PsaM family.

The protein localises to the plastid. Its subcellular location is the chloroplast thylakoid membrane. This chain is Photosystem I reaction center subunit XII, found in Anthoceros angustus (Hornwort).